The sequence spans 637 residues: Serine/threonine-protein kinase Nek11 (637 aa).

The 259-residue stretch at 29 to 287 folds into the Protein kinase domain; it reads YVLQQKLGSG…AIEILKIPYI (259 aa). ATP contacts are provided by residues 35–43 and K61; that span reads LGSGSFGTV. D158 acts as the Proton acceptor in catalysis. S273 is modified (phosphoserine; by CHEK1). Residues 302-385 adopt a coiled-coil conformation; that stretch reads TLEDKNLDCQ…QELRSRNFQQ (84 aa). The interval 399 to 446 is disordered; sequence GMEEKEEQPEGRPSCSPQDEDEERWQDREEEFDEPTLENLSEPQPIPS. Residues 416–434 show a composition bias toward acidic residues; sequence QDEDEERWQDREEEFDEPT.

This sequence belongs to the protein kinase superfamily. NEK Ser/Thr protein kinase family. NIMA subfamily. As to quaternary structure, interacts with NEK2. Mn(2+) serves as cofactor. It depends on Mg(2+) as a cofactor. In terms of processing, phosphorylated by NEK2. Phosphorylation at Ser-273 is important for its activation.

The protein localises to the nucleus. The protein resides in the nucleolus. It catalyses the reaction L-seryl-[protein] + ATP = O-phospho-L-seryl-[protein] + ADP + H(+). The enzyme catalyses L-threonyl-[protein] + ATP = O-phospho-L-threonyl-[protein] + ADP + H(+). With respect to regulation, autorepressed by intramolecular binding of the C-terminus which dissociates following phosphorylation by NEK2. Activated in response to DNA damage. Inhibited by zinc. Its function is as follows. Protein kinase which plays an important role in the G2/M checkpoint response to DNA damage. Controls degradation of CDC25A by directly phosphorylating it on residues whose phosphorylation is required for BTRC-mediated polyubiquitination and degradation. The chain is Serine/threonine-protein kinase Nek11 (NEK11) from Macaca fascicularis (Crab-eating macaque).